A 298-amino-acid chain; its full sequence is Tyrosine recombinase XerC (298 aa).

The 84-residue stretch at 1-84 (MNHIQEAFLN…TLRTFYEYWM (84 aa)) folds into the Core-binding (CB) domain. The Tyr recombinase domain maps to 105–286 (YLPQFFYEEE…SNQQLRKVYL (182 aa)). Catalysis depends on residues arginine 145, lysine 169, histidine 238, arginine 241, and histidine 264. Residue tyrosine 273 is the O-(3'-phospho-DNA)-tyrosine intermediate of the active site.

The protein belongs to the 'phage' integrase family. XerC subfamily. As to quaternary structure, forms a cyclic heterotetrameric complex composed of two molecules of XerC and two molecules of XerD.

The protein resides in the cytoplasm. Site-specific tyrosine recombinase, which acts by catalyzing the cutting and rejoining of the recombining DNA molecules. The XerC-XerD complex is essential to convert dimers of the bacterial chromosome into monomers to permit their segregation at cell division. It also contributes to the segregational stability of plasmids. The sequence is that of Tyrosine recombinase XerC from Staphylococcus aureus (strain MSSA476).